Here is a 662-residue protein sequence, read N- to C-terminus: U6 snRNA-specific terminal uridylyltransferase (662 aa).

Asp183 and Asp185 together coordinate Mg(2+). A PAP-associated domain is found at 384 to 437 (CKFFRELFKYYANFDFTNKAIYGKKAMQKKTLSSAHGGVEESPLMLMDPMDITH).

This sequence belongs to the DNA polymerase type-B-like family. In terms of assembly, forms a complex composed of sart-3, terminal uridylyltransferase usip-1 and U6 snRNA; complex formation is mediated by usip-1 and sart-3 binding to U6 snRNA. It depends on Mg(2+) as a cofactor. Requires Mn(2+) as cofactor. Ubiquitously expressed.

It is found in the nucleus. It localises to the nucleoplasm. The catalysed reaction is RNA(n) + UTP = RNA(n)-3'-uridine ribonucleotide + diphosphate. Functionally, acts as a specific terminal uridylyltransferase for U6 snRNA. Responsible for the addition of UTP at the 3' end of U6 snRNA which stabilizes U6 snRNA. Does not have activity towards modified uridine containing 3'-monophosphorylation or 2'-O-methylation. The chain is U6 snRNA-specific terminal uridylyltransferase from Caenorhabditis elegans.